Reading from the N-terminus, the 909-residue chain is Yellow mounds protein A (909 aa).

Residues 7-283 (LNVVSRILNK…KNLFELKNNK (277 aa)) enclose the MIF4G domain. Disordered regions lie at residues 178 to 232 (SMGG…NNNI), 415 to 439 (MESS…SGIK), 460 to 537 (INLP…SSAP), 627 to 689 (VPPV…SEAR), and 704 to 774 (SLSG…AKKH). Acidic residues predominate over residues 204–215 (DDDDHDEEDNEN). 2 stretches are compositionally biased toward low complexity: residues 216 to 231 (NYEN…NNNN) and 417 to 436 (SSSN…SSSS). The segment covering 473–490 (RSNSPSLSSVVKQPQSQQ) has biased composition (polar residues). The span at 491 to 525 (NNNNNNNNNNNNTTITTTTSSNNNINNNNNNNNNN) shows a compositional bias: low complexity. Polar residues predominate over residues 721–738 (STPTLKSTPAIVQNGGSI). Low complexity predominate over residues 739 to 756 (TSTSSSSSSSSSSSSSTT). The stretch at 845 to 877 (TMLFDLEEMAQEQQNLEKQNDQQQNLLTQNNQI) forms a coiled coil.

Functionally, plays as essential role in regulating terminal differentiation. The chain is Yellow mounds protein A (yelA) from Dictyostelium discoideum (Social amoeba).